The following is a 308-amino-acid chain: Ornithine carbamoyltransferase (308 aa).

Carbamoyl phosphate-binding positions include 53 to 56, Gln-80, Arg-104, and 131 to 134; these read STRT and HPCQ. Residues Asn-162, Asp-225, and 229-230 contribute to the L-ornithine site; that span reads SM. Residues 265-266 and Arg-293 contribute to the carbamoyl phosphate site; that span reads CL.

The protein belongs to the aspartate/ornithine carbamoyltransferase superfamily. OTCase family.

The protein localises to the cytoplasm. The enzyme catalyses carbamoyl phosphate + L-ornithine = L-citrulline + phosphate + H(+). The protein operates within amino-acid biosynthesis; L-arginine biosynthesis; L-arginine from L-ornithine and carbamoyl phosphate: step 1/3. Functionally, reversibly catalyzes the transfer of the carbamoyl group from carbamoyl phosphate (CP) to the N(epsilon) atom of ornithine (ORN) to produce L-citrulline. This Synechocystis sp. (strain ATCC 27184 / PCC 6803 / Kazusa) protein is Ornithine carbamoyltransferase (argF).